We begin with the raw amino-acid sequence, 148 residues long: Cysteine proteinase inhibitor 5 (148 aa).

The N-terminal stretch at 1–25 (MASKLYYAVAPLVLVLLLLAPLSSA) is a signal peptide. The short motif at 99-103 (QVVSG) is the Secondary area of contact element.

It belongs to the cystatin family. Phytocystatin subfamily.

It localises to the secreted. In terms of biological role, specific inhibitor of cysteine proteinases. Probably involved in the regulation of endogenous processes and in defense against pests and pathogens. This is Cysteine proteinase inhibitor 5 from Oryza sativa subsp. japonica (Rice).